A 226-amino-acid polypeptide reads, in one-letter code: Transmembrane protein 204 (226 aa).

Topologically, residues 1 to 5 (MTVRK) are cytoplasmic. A helical transmembrane segment spans residues 6 to 26 (VVATAVLVALVSLVLNNAAAF). At 27–103 (TPNWVYQTLE…LQFDMMRACN (77 aa)) the chain is on the extracellular side. The helical transmembrane segment at 104–124 (LVATAALAAGQLTFVLGLTGL) threads the bilayer. The Cytoplasmic portion of the chain corresponds to 125–136 (PLLSPDAQCWEE). The chain crosses the membrane as a helical span at residues 137–157 (AMAAAFQLASFVLVIGLVTFY). Over 158–170 (RIGPYTSLSWSCY) the chain is Extracellular. Residues 171 to 191 (LNIGACLLATLAAAMLIWNVL) traverse the membrane as a helical segment. At 192-226 (HRREDCTAPRVIVISRSLTARFRRGLDNDYVESPC) the chain is on the cytoplasmic side.

It localises to the cell junction. Its subcellular location is the adherens junction. The protein resides in the cell membrane. Functionally, can influence paracellular permeability. Appears to be involved in cell-cell interactions through adherens. The sequence is that of Transmembrane protein 204 (TMEM204) from Bos taurus (Bovine).